The following is a 160-amino-acid chain: 6,7-dimethyl-8-ribityllumazine synthase (160 aa).

Residues Trp26, 58 to 60, and 80 to 82 each bind 5-amino-6-(D-ribitylamino)uracil; these read AIE and VVI. Position 85-86 (85-86) interacts with (2S)-2-hydroxy-3-oxobutyl phosphate; it reads ET. His88 serves as the catalytic Proton donor. Asn113 serves as a coordination point for 5-amino-6-(D-ribitylamino)uracil. Residue Arg127 participates in (2S)-2-hydroxy-3-oxobutyl phosphate binding.

It belongs to the DMRL synthase family. In terms of assembly, homopentamer.

It carries out the reaction (2S)-2-hydroxy-3-oxobutyl phosphate + 5-amino-6-(D-ribitylamino)uracil = 6,7-dimethyl-8-(1-D-ribityl)lumazine + phosphate + 2 H2O + H(+). Its pathway is cofactor biosynthesis; riboflavin biosynthesis; riboflavin from 2-hydroxy-3-oxobutyl phosphate and 5-amino-6-(D-ribitylamino)uracil: step 1/2. In terms of biological role, catalyzes the formation of 6,7-dimethyl-8-ribityllumazine by condensation of 5-amino-6-(D-ribitylamino)uracil with 3,4-dihydroxy-2-butanone 4-phosphate. This is the penultimate step in the biosynthesis of riboflavin. In Mycobacteroides abscessus (strain ATCC 19977 / DSM 44196 / CCUG 20993 / CIP 104536 / JCM 13569 / NCTC 13031 / TMC 1543 / L948) (Mycobacterium abscessus), this protein is 6,7-dimethyl-8-ribityllumazine synthase.